The following is a 376-amino-acid chain: Alanine racemase 1 (376 aa).

The active-site Proton acceptor; specific for D-alanine is the Lys40. An N6-(pyridoxal phosphate)lysine modification is found at Lys40. Arg138 lines the substrate pocket. The active-site Proton acceptor; specific for L-alanine is Tyr268. Substrate is bound at residue Met316.

Belongs to the alanine racemase family. The cofactor is pyridoxal 5'-phosphate.

It catalyses the reaction L-alanine = D-alanine. The protein operates within amino-acid biosynthesis; D-alanine biosynthesis; D-alanine from L-alanine: step 1/1. Its function is as follows. Catalyzes the interconversion of L-alanine and D-alanine. May also act on other amino acids. The polypeptide is Alanine racemase 1 (alr1) (Oceanobacillus iheyensis (strain DSM 14371 / CIP 107618 / JCM 11309 / KCTC 3954 / HTE831)).